The primary structure comprises 209 residues: Probable L-serine dehydratase, alpha chain (209 aa).

The protein belongs to the iron-sulfur dependent L-serine dehydratase family. As to quaternary structure, heterodimer of an alpha chain and a beta chain. It depends on [4Fe-4S] cluster as a cofactor.

The enzyme catalyses L-serine = pyruvate + NH4(+). Its pathway is carbohydrate biosynthesis; gluconeogenesis. In Latilactobacillus sakei (Lactobacillus sakei), this protein is Probable L-serine dehydratase, alpha chain (sdhA).